A 662-amino-acid chain; its full sequence is Acetyl-coenzyme A synthetase (662 aa).

CoA contacts are provided by residues 197 to 200 (RKGK) and threonine 317. Residues 393 to 395 (GEP), 417 to 422 (DTWWQT), aspartate 510, and arginine 525 each bind ATP. Serine 533 is a binding site for CoA. Arginine 536 contacts ATP. Histidine 549 and valine 552 together coordinate Mg(2+). At lysine 623 the chain carries N6-acetyllysine.

This sequence belongs to the ATP-dependent AMP-binding enzyme family. It depends on Mg(2+) as a cofactor. Acetylated. Deacetylation by the SIR2-homolog deacetylase activates the enzyme.

It carries out the reaction acetate + ATP + CoA = acetyl-CoA + AMP + diphosphate. In terms of biological role, catalyzes the conversion of acetate into acetyl-CoA (AcCoA), an essential intermediate at the junction of anabolic and catabolic pathways. AcsA undergoes a two-step reaction. In the first half reaction, AcsA combines acetate with ATP to form acetyl-adenylate (AcAMP) intermediate. In the second half reaction, it can then transfer the acetyl group from AcAMP to the sulfhydryl group of CoA, forming the product AcCoA. The sequence is that of Acetyl-coenzyme A synthetase from Helicobacter pylori (strain G27).